Consider the following 300-residue polypeptide: Tyrosine recombinase XerC (300 aa).

The 87-residue stretch at 2 to 88 folds into the Core-binding (CB) domain; that stretch reads IQEGKLEQQF…SLRSFYTFLL (87 aa). Residues 109 to 294 form the Tyr recombinase domain; sequence RLPKFFYSEE…TKEHLKSTYM (186 aa). Residues arginine 150, lysine 174, histidine 246, arginine 249, and histidine 272 contribute to the active site. The active-site O-(3'-phospho-DNA)-tyrosine intermediate is tyrosine 281.

It belongs to the 'phage' integrase family. XerC subfamily. Forms a cyclic heterotetrameric complex composed of two molecules of XerC and two molecules of XerD.

The protein localises to the cytoplasm. Its function is as follows. Site-specific tyrosine recombinase, which acts by catalyzing the cutting and rejoining of the recombining DNA molecules. The XerC-XerD complex is essential to convert dimers of the bacterial chromosome into monomers to permit their segregation at cell division. It also contributes to the segregational stability of plasmids. This is Tyrosine recombinase XerC from Listeria monocytogenes serovar 1/2a (strain ATCC BAA-679 / EGD-e).